The primary structure comprises 289 residues: Shikimate dehydrogenase (NADP(+)) (289 aa).

Shikimate is bound by residues Ser-22 to Ser-24 and Thr-69. The active-site Proton acceptor is Lys-73. Residue Glu-85 coordinates NADP(+). The shikimate site is built by Asn-94 and Asp-109. Residues Gly-134–Ala-138, Asn-158–Arg-163, and Ile-226 each bind NADP(+). Tyr-228 lines the shikimate pocket. Gly-249 is a binding site for NADP(+).

This sequence belongs to the shikimate dehydrogenase family. As to quaternary structure, homodimer.

The enzyme catalyses shikimate + NADP(+) = 3-dehydroshikimate + NADPH + H(+). Its pathway is metabolic intermediate biosynthesis; chorismate biosynthesis; chorismate from D-erythrose 4-phosphate and phosphoenolpyruvate: step 4/7. Involved in the biosynthesis of the chorismate, which leads to the biosynthesis of aromatic amino acids. Catalyzes the reversible NADPH linked reduction of 3-dehydroshikimate (DHSA) to yield shikimate (SA). This chain is Shikimate dehydrogenase (NADP(+)), found in Brucella melitensis biotype 2 (strain ATCC 23457).